Here is a 586-residue protein sequence, read N- to C-terminus: Nucleus accumbens-associated protein 2 (586 aa).

Residues 30–94 (CDVSIVVKGQ…CYTGKLTMAA (65 aa)) form the BTB domain. Lysine 171 participates in a covalent cross-link: Glycyl lysine isopeptide (Lys-Gly) (interchain with G-Cter in SUMO2). The tract at residues 177–196 (MPPASGPGLASKRPLETGPR) is disordered. A Glycyl lysine isopeptide (Lys-Gly) (interchain with G-Cter in SUMO2) cross-link involves residue lysine 215. Positions 236–272 (QVPYPPGERTSPGASSLPTTDSPTSYHNEEDEEDDEA) are disordered. The span at 247–261 (PGASSLPTTDSPTSY) shows a compositional bias: polar residues. Residues lysine 297, lysine 427, and lysine 454 each participate in a glycyl lysine isopeptide (Lys-Gly) (interchain with G-Cter in SUMO2) cross-link. Positions 349-446 (GSGVYITRGQ…DMCTNARRVR (98 aa)) constitute a BEN domain. Residues 542 to 586 (APEQLPADGQSSPQAFEQGNTSSSRPQTPVATATRRPEGTYAGTL) are disordered. Over residues 550 to 572 (GQSSPQAFEQGNTSSSRPQTPVA) the composition is skewed to polar residues.

As to quaternary structure, homooligomer; mediated by the BTB domain. Interacts with the NuRD complex. Interacts (via C-terminal part) with HDAC2. Interacts (via BTB domain) with MTA1, MTA2 and MTA3.

The protein resides in the nucleus. In terms of biological role, functions as a transcriptional repressor through its association with the NuRD complex. Recruits the NuRD complex to the promoter of MDM2, leading to the repression of MDM2 transcription and subsequent stability of p53/TP53. The chain is Nucleus accumbens-associated protein 2 (Nacc2) from Mus musculus (Mouse).